Consider the following 173-residue polypeptide: Flagellar assembly factor FliW (173 aa).

The segment at 152–173 is disordered; the sequence is STTVRRKASPPAAGEDKGDVQE.

The protein belongs to the FliW family. As to quaternary structure, interacts with translational regulator CsrA and flagellin(s).

It localises to the cytoplasm. Acts as an anti-CsrA protein, binds CsrA and prevents it from repressing translation of its target genes, one of which is flagellin. Binds to flagellin and participates in the assembly of the flagellum. This Nitratidesulfovibrio vulgaris (strain ATCC 29579 / DSM 644 / CCUG 34227 / NCIMB 8303 / VKM B-1760 / Hildenborough) (Desulfovibrio vulgaris) protein is Flagellar assembly factor FliW.